The following is a 225-amino-acid chain: Ribonuclease 3 (225 aa).

Residues 5 to 127 form the RNase III domain; the sequence is IEKLTRQLGY…IIGAVYLDSD (123 aa). Residue Glu40 participates in Mg(2+) binding. Asp44 is an active-site residue. 2 residues coordinate Mg(2+): Asp113 and Glu116. The active site involves Glu116. A DRBM domain is found at 154–224; that stretch reads DPKTRLQEFL…AELALEQLTN (71 aa).

This sequence belongs to the ribonuclease III family. As to quaternary structure, homodimer. Requires Mg(2+) as cofactor.

It is found in the cytoplasm. It carries out the reaction Endonucleolytic cleavage to 5'-phosphomonoester.. Digests double-stranded RNA. Involved in the processing of primary rRNA transcript to yield the immediate precursors to the large and small rRNAs (23S and 16S). Processes some mRNAs, and tRNAs when they are encoded in the rRNA operon. Processes pre-crRNA and tracrRNA of type II CRISPR loci if present in the organism. This is Ribonuclease 3 from Vibrio vulnificus (strain CMCP6).